Reading from the N-terminus, the 178-residue chain is Transcription termination/antitermination protein NusG (178 aa).

In terms of domain architecture, KOW spans 126-156; it reads VGQQVRVNEGPFADFNGVVEEVNYERNKLRV.

It belongs to the NusG family.

Functionally, participates in transcription elongation, termination and antitermination. The protein is Transcription termination/antitermination protein NusG of Neisseria meningitidis serogroup B (strain ATCC BAA-335 / MC58).